Here is a 130-residue protein sequence, read N- to C-terminus: Small ribosomal subunit protein uS8 (130 aa).

It belongs to the universal ribosomal protein uS8 family. In terms of assembly, part of the 30S ribosomal subunit. Contacts proteins S5 and S12.

In terms of biological role, one of the primary rRNA binding proteins, it binds directly to 16S rRNA central domain where it helps coordinate assembly of the platform of the 30S subunit. This chain is Small ribosomal subunit protein uS8, found in Ruegeria sp. (strain TM1040) (Silicibacter sp.).